Reading from the N-terminus, the 244-residue chain is UDP-2,3-diacylglucosamine hydrolase (244 aa).

5 residues coordinate Mn(2+): Asp-8, His-10, Asp-41, Asn-79, and His-114. Asn-79–Arg-80 serves as a coordination point for substrate. Substrate-binding residues include Asp-122, Lys-164, Lys-167, and His-195. Mn(2+) is bound by residues His-195 and His-197.

The protein belongs to the LpxH family. Mn(2+) is required as a cofactor.

It is found in the cell inner membrane. The enzyme catalyses UDP-2-N,3-O-bis[(3R)-3-hydroxytetradecanoyl]-alpha-D-glucosamine + H2O = 2-N,3-O-bis[(3R)-3-hydroxytetradecanoyl]-alpha-D-glucosaminyl 1-phosphate + UMP + 2 H(+). Its pathway is glycolipid biosynthesis; lipid IV(A) biosynthesis; lipid IV(A) from (3R)-3-hydroxytetradecanoyl-[acyl-carrier-protein] and UDP-N-acetyl-alpha-D-glucosamine: step 4/6. Hydrolyzes the pyrophosphate bond of UDP-2,3-diacylglucosamine to yield 2,3-diacylglucosamine 1-phosphate (lipid X) and UMP by catalyzing the attack of water at the alpha-P atom. Involved in the biosynthesis of lipid A, a phosphorylated glycolipid that anchors the lipopolysaccharide to the outer membrane of the cell. The polypeptide is UDP-2,3-diacylglucosamine hydrolase (Vibrio atlanticus (strain LGP32) (Vibrio splendidus (strain Mel32))).